A 784-amino-acid chain; its full sequence is MVKFTKQFEGQLVPEWKDAFVDYSQLKKDLKKIHLFTNGVEKKHTETSLIKTVKSSLGRLSIFGNKGREQSRVIQVHKKLASSGSNNDVYETELLEKIADDTDAAKEFFACLDMQLNKVNQFYKTKEKEFLERGECLKKQMDILIELKDAFKQKQANGESTQESKEDDSISCTISCEYDSVRGRTEEMQLQVSCLDNLEDNGEEALESLGSEEPIKANNEDSKLTTVSSRVFSCQGKNVKIKIPLTNPSRTFSAISYLINQSSSKKNGPDGGNKLQISKKKLSHAEKMIKGALTELFKGLNYLKTYRNLNILAFMNILKKFDKVTGKQILPIYLKVVESSYFNISDKVMILSDEVEEWFIKHLAGENRRKAMKYLKPHHRKESHSVTFFIGLFTGCFVALLAGYIIVAHLTGMYRQHSANTFYMETAYPVLSMFGLLFLHLFLYGCNIFMWRKARINYSFIFELGSKNELKYRDVFLICTASMSAIAGVMFVHLSLLEKGYSFRQVQVIPGLLLLGFLLILICPLNIFYKSSRYRLISVIRNIVFSPLYKVVMLDFFMADQLCSQVPMLRNLEYIACYYITGSYATQDYEYCMRVKYYRDLAYAVSFLPYYWRAMQCARRWFDEGETSHLVNLGKYVSAMLAAGTKVAYEKERSLGWLCLVVAMSSVATIYQLYWDFVKDWGLLQHNSNNPWLRNQLMLRQKSIYYFSMVLNLVLRLAWLQTVLHSSFEHVDYRVTGLFLAALEVIRRGQWNFYRLENEHLNNAGKFRAVKTVPLPFREVDEED.

The Cytoplasmic portion of the chain corresponds to 1 to 387; that stretch reads MVKFTKQFEG…HHRKESHSVT (387 aa). One can recognise an SPX domain in the interval 2–335; the sequence is VKFTKQFEGQ…GKQILPIYLK (334 aa). A helical membrane pass occupies residues 388–408; the sequence is FFIGLFTGCFVALLAGYIIVA. Residues 409–429 are Extracellular-facing; that stretch reads HLTGMYRQHSANTFYMETAYP. Residues 430 to 450 traverse the membrane as a helical segment; it reads VLSMFGLLFLHLFLYGCNIFM. Over 451–474 the chain is Cytoplasmic; it reads WRKARINYSFIFELGSKNELKYRD. The helical transmembrane segment at 475 to 495 threads the bilayer; the sequence is VFLICTASMSAIAGVMFVHLS. At 496 to 507 the chain is on the extracellular side; it reads LLEKGYSFRQVQ. Residues 508-528 form a helical membrane-spanning segment; the sequence is VIPGLLLLGFLLILICPLNIF. Residues 529 to 654 are Cytoplasmic-facing; the sequence is YKSSRYRLIS…TKVAYEKERS (126 aa). The EXS domain occupies 593 to 784; that stretch reads MRVKYYRDLA…LPFREVDEED (192 aa). Residues 655 to 675 traverse the membrane as a helical segment; sequence LGWLCLVVAMSSVATIYQLYW. At 676-703 the chain is on the extracellular side; that stretch reads DFVKDWGLLQHNSNNPWLRNQLMLRQKS. A helical transmembrane segment spans residues 704 to 724; that stretch reads IYYFSMVLNLVLRLAWLQTVL. Residues 725 to 784 lie on the Cytoplasmic side of the membrane; that stretch reads HSSFEHVDYRVTGLFLAALEVIRRGQWNFYRLENEHLNNAGKFRAVKTVPLPFREVDEED.

The protein belongs to the SYG1 (TC 2.A.94) family. Expressed in vascular cylinder of roots, leaves, stems, petals, sepals and filaments. Expressed in receptacle, stigma apex and anther connective tissue.

The protein localises to the cell membrane. Functionally, contributes to the loading of inorganic phosphate (Pi) into the root xylem vessels. This is Phosphate transporter PHO1 homolog 1 (PHO1-H1) from Arabidopsis thaliana (Mouse-ear cress).